A 61-amino-acid polypeptide reads, in one-letter code: Small ribosomal subunit protein uS14 (61 aa).

C24, C27, C40, and C43 together coordinate Zn(2+).

Belongs to the universal ribosomal protein uS14 family. Zinc-binding uS14 subfamily. In terms of assembly, part of the 30S ribosomal subunit. Contacts proteins S3 and S10. It depends on Zn(2+) as a cofactor.

Functionally, binds 16S rRNA, required for the assembly of 30S particles and may also be responsible for determining the conformation of the 16S rRNA at the A site. This Thermus aquaticus protein is Small ribosomal subunit protein uS14.